Reading from the N-terminus, the 129-residue chain is Cytochrome b5 (129 aa).

Residues 8-84 (TTIYTHEEVA…LEKLYIGNLK (77 aa)) enclose the Cytochrome b5 heme-binding domain. The heme site is built by histidine 43 and histidine 67. A helical transmembrane segment spans residues 104 to 124 (GINFPLIAVGVFLAAFGVYYY).

The protein belongs to the cytochrome b5 family.

It is found in the endoplasmic reticulum membrane. Its subcellular location is the microsome membrane. Membrane bound hemoprotein which function as an electron carrier for several membrane bound oxygenases. The chain is Cytochrome b5 (Cytb5) from Candida tropicalis (Yeast).